Here is a 551-residue protein sequence, read N- to C-terminus: E3 ubiquitin-protein ligase HEL1 (551 aa).

The TRIAD supradomain stretch occupies residues 175-388; the sequence is NDFTCIICCD…KNFFQCTMYK (214 aa). Residues Cys-179, Cys-182, Cys-200, Cys-203, Cys-301, Cys-304, His-309, Cys-314, Cys-341, and Cys-344 each contribute to the Zn(2+) site. Residues 179-225 form an RING-type 1 zinc finger; it reads CIICCDKKDTETFALECGHEYCINCYRHYIKDKLHEGNIITCMDCSL. The IBR-type zinc finger occupies 242 to 314; that stretch reads SKLMDSSIKS…GFEVHSPADC (73 aa). The RING-type 2; atypical zinc-finger motif lies at 341–370; it reads CPKCSVNIEKNGGCNHMVCSSCKYEFCWIC. Residue Cys-354 is part of the active site. Zn(2+)-binding residues include Cys-359, Cys-362, Cys-367, Cys-370, His-377, and Cys-384.

The protein belongs to the RBR family. As to quaternary structure, interacts with the E2 ubiquitin-conjugating enzyme UBC4 and histones H3 and H4.

The catalysed reaction is [E2 ubiquitin-conjugating enzyme]-S-ubiquitinyl-L-cysteine + [acceptor protein]-L-lysine = [E2 ubiquitin-conjugating enzyme]-L-cysteine + [acceptor protein]-N(6)-ubiquitinyl-L-lysine.. Its pathway is protein modification; protein ubiquitination. Its function is as follows. Probable ubiquitin-protein ligase involved in the degradation-related ubiquitination of histones. Contributes to the post-translational regulation of histone protein levels by polyubiquitination of excess histones for subsequent degradation. In Saccharomyces cerevisiae (strain ATCC 204508 / S288c) (Baker's yeast), this protein is E3 ubiquitin-protein ligase HEL1.